Consider the following 171-residue polypeptide: ATP synthase subunit b (171 aa).

A helical membrane pass occupies residues 2–22; that stretch reads FVVKMVLGFLILLSPLCATGL.

Belongs to the ATPase B chain family. F-type ATPases have 2 components, F(1) - the catalytic core - and F(0) - the membrane proton channel. F(1) has five subunits: alpha(3), beta(3), gamma(1), delta(1), epsilon(1). F(0) has three main subunits: a(1), b(2) and c(10-14). The alpha and beta chains form an alternating ring which encloses part of the gamma chain. F(1) is attached to F(0) by a central stalk formed by the gamma and epsilon chains, while a peripheral stalk is formed by the delta and b chains.

It is found in the cell inner membrane. Its function is as follows. F(1)F(0) ATP synthase produces ATP from ADP in the presence of a proton or sodium gradient. F-type ATPases consist of two structural domains, F(1) containing the extramembraneous catalytic core and F(0) containing the membrane proton channel, linked together by a central stalk and a peripheral stalk. During catalysis, ATP synthesis in the catalytic domain of F(1) is coupled via a rotary mechanism of the central stalk subunits to proton translocation. In terms of biological role, component of the F(0) channel, it forms part of the peripheral stalk, linking F(1) to F(0). The protein is ATP synthase subunit b of Helicobacter pylori (strain G27).